Here is a 66-residue protein sequence, read N- to C-terminus: uncharacterized protein (66 aa).

The segment covering 1–20 (MTIINSISNFGSNNSFSNNN) has biased composition (low complexity). Residues 1–47 (MTIINSISNFGSNNSFSNNNTVNQKSVIKRSKQMKNDNTSIGSSFKN) form a disordered region. Residues 36-47 (NDNTSIGSSFKN) show a composition bias toward polar residues.

This is an uncharacterized protein from Dictyostelium discoideum (Social amoeba).